The following is a 1390-amino-acid chain: DNA-directed RNA polymerase III subunit RPC1 (1390 aa).

Zn(2+) is bound by residues Cys-69, Cys-72, Cys-79, His-82, Cys-109, and Cys-112. Position 144 (Lys-144) interacts with DNA. The Zn(2+) site is built by Cys-156 and Cys-159. Positions 167, 326, 348, 353, 360, and 366 each coordinate DNA. Residue Lys-445 is modified to N6-acetyllysine. Arg-464 contributes to the RNA binding site. Residues Asp-499, Asp-501, and Asp-503 each coordinate Mg(2+). Residue Asp-503 participates in RNA binding. The bridging helix stretch occupies residues 843 to 884; sequence TPTEFFFHTMAGREGLVDTAVKTAETGYMQRRLVKSLEDLCS. Positions 1029–1070 are trigger loop; it reads PGSAVGALCAQSIGEPGTQMTLKTFHFAGVASMNITLGVPRI. Positions 1159, 1305, and 1323 each coordinate DNA.

The protein belongs to the RNA polymerase beta' chain family. As to quaternary structure, component of the RNA polymerase III (Pol III) (Pol III) complex consisting of 17 subunits: a ten-subunit catalytic core composed of POLR3A/RPC1, POLR3B/RPC2, POLR1C/RPAC1, POLR1D/RPAC2, POLR3K/RPC10, POLR2E/RPABC1, POLR2F/RPABC2, POLR2H/RPABC3, POLR2K/RPABC4 and POLR2L/RPABC5; a mobile stalk composed of two subunits POLR3H/RPC8 and CRCP/RPC9, protruding from the core and functioning primarily in transcription initiation; and additional subunits homologous to general transcription factors of the RNA polymerase II machinery, POLR3C/RPC3-POLR3F/RPC6-POLR3G/RPC7 heterotrimer required for transcription initiation and POLR3D/RPC4-POLR3E/RPC5 heterodimer involved in both transcription initiation and termination. Pol III exists as two alternative complexes defined by the mutually exclusive incorporation of subunit POLR3G/RPC7alpha or POLR3GL/RPC7beta. The presence of POLR3G/RPC7alpha or POLR3GL/RPC7beta differentially modulates the transcription potential of Pol III, with POLR3G/RPC7alpha specifically associated with transcription of snaR-A non-coding RNAs. As part of the RNA polymerase III complex, interacts with PKP2. Requires Mg(2+) as cofactor. Expressed in the brain, in the cortex and the white matter (at protein level).

Its subcellular location is the nucleus. The protein localises to the cytoplasm. It localises to the cytosol. It catalyses the reaction RNA(n) + a ribonucleoside 5'-triphosphate = RNA(n+1) + diphosphate. Functionally, catalytic core component of RNA polymerase III (Pol III), a DNA-dependent RNA polymerase which synthesizes small non-coding RNAs using the four ribonucleoside triphosphates as substrates. Synthesizes 5S rRNA, snRNAs, tRNAs and miRNAs from at least 500 distinct genomic loci. Pol III-mediated transcription cycle proceeds through transcription initiation, transcription elongation and transcription termination stages. During transcription initiation, Pol III is recruited to DNA promoters type I, II or III with the help of general transcription factors and other specific initiation factors. Once the polymerase has escaped from the promoter it enters the elongation phase during which RNA is actively polymerized, based on complementarity with the template DNA strand. Transcription termination involves the release of the RNA transcript and polymerase from the DNA. Forms Pol III active center together with the second largest subunit POLR3B/RPC2. Appends one nucleotide at a time to the 3' end of the nascent RNA, with POLR3A/RPC1 contributing a Mg(2+)-coordinating DxDGD motif, and POLR3B/RPC2 participating in the coordination of a second Mg(2+) ion and providing lysine residues believed to facilitate Watson-Crick base pairing between the incoming nucleotide and template base. Typically, Mg(2+) ions direct a 5' nucleoside triphosphate to form a phosphodiester bond with the 3' hydroxyl of the preceding nucleotide of the nascent RNA, with the elimination of pyrophosphate. Pol III plays a key role in sensing and limiting infection by intracellular bacteria and DNA viruses. Acts as a nuclear and cytosolic DNA sensor involved in innate immune response. Can sense non-self dsDNA that serves as template for transcription into dsRNA. The non-self RNA polymerase III transcripts, such as Epstein-Barr virus-encoded RNAs (EBERs) induce type I interferon and NF-kappa-B through the RIG-I pathway. The sequence is that of DNA-directed RNA polymerase III subunit RPC1 from Homo sapiens (Human).